The sequence spans 89 residues: Small ribosomal subunit protein uS15 (89 aa).

A compositionally biased stretch (basic and acidic residues) spans 1–21; it reads MSIAAERKAEVIKTNARKDGD. The disordered stretch occupies residues 1–24; that stretch reads MSIAAERKAEVIKTNARKDGDTGS.

Belongs to the universal ribosomal protein uS15 family. In terms of assembly, part of the 30S ribosomal subunit. Forms a bridge to the 50S subunit in the 70S ribosome, contacting the 23S rRNA.

Functionally, one of the primary rRNA binding proteins, it binds directly to 16S rRNA where it helps nucleate assembly of the platform of the 30S subunit by binding and bridging several RNA helices of the 16S rRNA. Forms an intersubunit bridge (bridge B4) with the 23S rRNA of the 50S subunit in the ribosome. The protein is Small ribosomal subunit protein uS15 of Rhodopseudomonas palustris (strain BisA53).